The chain runs to 623 residues: Low affinity potassium transport system protein Kup (623 aa).

Transmembrane regions (helical) follow at residues 9-29, 49-69, 101-121, 137-157, 163-183, 212-232, 247-267, 276-296, 337-357, 363-383, 395-415, and 419-439; these read LPAI…TSPL, VFGF…FKYL, VLVI…VITP, PSLD…LFMI, GMVG…LAVL, AVSF…EALY, WFSV…ALLL, PFFL…ATLA, IYIP…IVSF, LAAA…ILFA, ILVG…FSAN, and LFSG…IMTT.

The protein belongs to the HAK/KUP transporter (TC 2.A.72) family.

It is found in the cell inner membrane. The catalysed reaction is K(+)(in) + H(+)(in) = K(+)(out) + H(+)(out). Functionally, responsible for the low-affinity transport of potassium into the cell. Likely operates as a K(+):H(+) symporter. The protein is Low affinity potassium transport system protein Kup of Cronobacter sakazakii (strain ATCC BAA-894) (Enterobacter sakazakii).